Here is a 348-residue protein sequence, read N- to C-terminus: CCN family member 2 (348 aa).

The first 25 residues, 1 to 25 (MLASVAGPISLALVLLALCTRPAMG), serve as a signal peptide directing secretion. In terms of domain architecture, IGFBP N-terminal spans 26 to 97 (QDCSAQCQCA…NRKIGVCTAK (72 aa)). 6 disulfide bridges follow: C28/C53, C32/C55, C34/C56, C42/C59, C67/C81, and C73/C94. One can recognise a VWFC domain in the interval 100–166 (APCVFGGSVY…GKCCEEWVCD (67 aa)). In terms of domain architecture, TSP type-1 spans 197 to 242 (NCLVQTTEWSACSKTCGMGISTRVTNDNTFCRLEKQSRLCMVRPCE). A heparin-binding region spans residues 246–348 (EENIKKGKKC…YYRKMYGDMA (103 aa)). 5 disulfide bridges follow: C255-C292, C272-C306, C283-C322, C286-C324, and C291-C328. The region spanning 255 to 329 (CIRTPKIAKP…KTCACHYNCP (75 aa)) is the CTCK domain.

It belongs to the CCN family. Monomer. Interacts with TSKU. In terms of tissue distribution, testis, spleen, kidney, lung, heart, and brain (lowest level in testis and highest in lung).

Its subcellular location is the secreted. It is found in the extracellular space. The protein resides in the extracellular matrix. In terms of biological role, major connective tissue mitoattractant secreted by vascular endothelial cells. Promotes proliferation and differentiation of chondrocytes. Is involved in the stimulation of osteoblast differentiation and has a critical role in osteogenesis. Mediates heparin- and divalent cation-dependent cell adhesion in many cell types including fibroblasts, myofibroblasts, endothelial and epithelial cells. Enhances fibroblast growth factor-induced DNA synthesis. This is CCN family member 2 from Mus musculus (Mouse).